Reading from the N-terminus, the 349-residue chain is Hydroxymethylglutaryl-CoA synthase (349 aa).

2 residues coordinate (3S)-3-hydroxy-3-methylglutaryl-CoA: Asp-30 and Ala-31. The active-site Proton donor/acceptor is Glu-82. (3S)-3-hydroxy-3-methylglutaryl-CoA-binding residues include Cys-114 and Thr-155. Cys-114 functions as the Acyl-thioester intermediate in the catalytic mechanism. CoA is bound at residue Arg-203. The (3S)-3-hydroxy-3-methylglutaryl-CoA site is built by Thr-205 and His-238. His-238 functions as the Proton donor/acceptor in the catalytic mechanism. Lys-243 provides a ligand contact to CoA. (3S)-3-hydroxy-3-methylglutaryl-CoA-binding residues include Asn-270 and Ser-300.

It belongs to the thiolase-like superfamily. Archaeal HMG-CoA synthase family. In terms of assembly, interacts with acetoacetyl-CoA thiolase that catalyzes the precedent step in the pathway and with a DUF35 protein. The acetoacetyl-CoA thiolase/HMG-CoA synthase complex channels the intermediate via a fused CoA-binding site, which allows for efficient coupling of the endergonic thiolase reaction with the exergonic HMGCS reaction.

The enzyme catalyses acetoacetyl-CoA + acetyl-CoA + H2O = (3S)-3-hydroxy-3-methylglutaryl-CoA + CoA + H(+). It participates in metabolic intermediate biosynthesis; (R)-mevalonate biosynthesis; (R)-mevalonate from acetyl-CoA: step 2/3. Catalyzes the condensation of acetyl-CoA with acetoacetyl-CoA to form 3-hydroxy-3-methylglutaryl-CoA (HMG-CoA). Functions in the mevalonate (MVA) pathway leading to isopentenyl diphosphate (IPP), a key precursor for the biosynthesis of isoprenoid compounds that are building blocks of archaeal membrane lipids. The chain is Hydroxymethylglutaryl-CoA synthase from Methanococcus maripaludis (strain C6 / ATCC BAA-1332).